The sequence spans 460 residues: UDP-N-acetylmuramoylalanine--D-glutamate ligase (460 aa).

An ATP-binding site is contributed by 120–126; the sequence is GSNGKTT.

Belongs to the MurCDEF family.

It is found in the cytoplasm. It catalyses the reaction UDP-N-acetyl-alpha-D-muramoyl-L-alanine + D-glutamate + ATP = UDP-N-acetyl-alpha-D-muramoyl-L-alanyl-D-glutamate + ADP + phosphate + H(+). Its pathway is cell wall biogenesis; peptidoglycan biosynthesis. Cell wall formation. Catalyzes the addition of glutamate to the nucleotide precursor UDP-N-acetylmuramoyl-L-alanine (UMA). This is UDP-N-acetylmuramoylalanine--D-glutamate ligase from Lactobacillus johnsonii (strain CNCM I-12250 / La1 / NCC 533).